The chain runs to 793 residues: E3 UFM1-protein ligase 1 (793 aa).

A2 carries the post-translational modification N-acetylalanine. Residues 2 to 200 (ADAWEEIRRL…RGLFSAITRP (199 aa)) are mediates interaction with DDRGK1. Positions 2–212 (ADAWEEIRRL…VNSLISKYGF (211 aa)) are required for E3 UFM1-protein ligase activity. The involved in CDK5RAP3-binding stretch occupies residues 121 to 250 (DRLAEEVNDK…KAVFVPDIYS (130 aa)). A mediates interaction with TRIP4 region spans residues 200–400 (PTAVNSLISK…NPVHLITEED (201 aa)). A disordered region spans residues 407-473 (LESVSTSKKD…SSHTGKKKPE (67 aa)). R433 is subject to Omega-N-methylarginine. S458 bears the Phosphoserine mark. The interval 490–684 (IQDAPEEFIS…QLKVTEDPAL (195 aa)) is mediates interaction with CDK5RAP3. T536 is subject to Phosphothreonine.

It belongs to the UFL1 family. As to quaternary structure, catalytic component of the UFM1 ribosome E3 ligase (UREL) complex, composed of UFL1, DDRGK1 and CDK5RAP3. Interacts with E2-like enzyme UFC1. Interacts with RELA. Interacts with NBN; promoting recruitment to double-strand breaks following DNA damage. Interacts (when phosphorylated) with YWHAG/14-3-3-gamma; sequestering UFL1 and preventing its association with PDCD1/PD-1 substrate. In terms of processing, ubiquitinated, leading to its degradation by the proteasome. Interaction with CDK5RAP3 protects both proteins against ubiquitination and degradation via the proteasome. Post-translationally, phosphorylation at Thr-536 by AMPK promotes its interaction with YWHAG/14-3-3-gamma, thereby preventing UFL1 association with PDCD1/PD-1 substrate.

It localises to the endoplasmic reticulum membrane. The protein resides in the cytoplasm. It is found in the cytosol. The protein localises to the nucleus. Its subcellular location is the chromosome. Its function is as follows. E3 protein ligase that mediates ufmylation, the covalent attachment of the ubiquitin-like modifier UFM1 to lysine residues on target proteins, and which plays a key role in various processes, such as ribosome recycling, response to DNA damage, interferon response or reticulophagy (also called ER-phagy). Catalyzes ufmylation of many protein, such as CD274/PD-L1, CDK5RAP3, CYB5R3, DDRGK1, EIF6, histone H4, MRE11, P4HB, PDCD1/PD-1, TRIP4, RPN1, RPS20/uS10, RPL10/uL16, RPL26/uL24, SYVN1/HRD1 and TP53/p53. As part of the UREL complex, plays a key role in ribosome recycling by catalyzing mono-ufmylation of RPL26/uL24 subunit of the 60S ribosome. Ufmylation of RPL26/uL24 occurs on free 60S ribosomes following ribosome dissociation: it weakens the junction between post-termination 60S subunits and SEC61 translocons, promoting release and recycling of the large ribosomal subunit from the endoplasmic reticulum membrane. Ufmylation of RPL26/uL24 and subsequent 60S ribosome recycling either take place after normal termination of translation or after ribosome stalling during cotranslational translocation at the endoplasmic reticulum. Involved in reticulophagy in response to endoplasmic reticulum stress by mediating ufmylation of proteins such as CYB5R3 and RPN1, thereby promoting lysosomal degradation of ufmylated proteins. Ufmylation in response to endoplasmic reticulum stress is essential for processes such as hematopoiesis, blood vessel morphogenesis or inflammatory response. Mediates ufmylation of DDRGK1 and CDK5RAP3; the role of these modifications is however unclear: as both DDRGK1 and CDK5RAP3 act as substrate adapters for ufmylation, it is uncertain whether ufmylation of these proteins is, a collateral effect or is required for ufmylation. Acts as a negative regulator of T-cell activation by mediating ufmylation and stabilization of PDCD1/PD-1. Also involved in the response to DNA damage: recruited to double-strand break sites following DNA damage and mediates monoufmylation of histone H4 and ufmylation of MRE11. Mediates ufmylation of TP53/p53, promoting its stability. Catalyzes ufmylation of TRIP4, thereby playing a role in nuclear receptor-mediated transcription. Required for hematopoietic stem cell function and hematopoiesis. This Macaca fascicularis (Crab-eating macaque) protein is E3 UFM1-protein ligase 1.